A 325-amino-acid chain; its full sequence is Probable cell division protein WhiA (325 aa).

The segment at residues 273 to 306 (SLEELGALADPPLTKDAVAGRIRRLLALADKRAN) is a DNA-binding region (H-T-H motif).

This sequence belongs to the WhiA family.

Functionally, involved in cell division and chromosome segregation. The sequence is that of Probable cell division protein WhiA from Parafrankia sp. (strain EAN1pec).